We begin with the raw amino-acid sequence, 415 residues long: Gamma-glutamyl phosphate reductase (415 aa).

Belongs to the gamma-glutamyl phosphate reductase family.

The protein localises to the cytoplasm. It carries out the reaction L-glutamate 5-semialdehyde + phosphate + NADP(+) = L-glutamyl 5-phosphate + NADPH + H(+). It participates in amino-acid biosynthesis; L-proline biosynthesis; L-glutamate 5-semialdehyde from L-glutamate: step 2/2. Functionally, catalyzes the NADPH-dependent reduction of L-glutamate 5-phosphate into L-glutamate 5-semialdehyde and phosphate. The product spontaneously undergoes cyclization to form 1-pyrroline-5-carboxylate. The polypeptide is Gamma-glutamyl phosphate reductase (Shouchella clausii (strain KSM-K16) (Alkalihalobacillus clausii)).